The chain runs to 934 residues: Protocadherin gamma-C3 (934 aa).

An N-terminal signal peptide occupies residues 1-31; that stretch reads MVPEAWRSGLVSTGRVVGVLLLLGALNKAST. 6 consecutive Cadherin domains span residues 32-135, 136-244, 245-352, 353-457, 458-567, and 572-685; these read VIHY…NPAF, PTQE…APVF, NQSL…APEI, TVTS…PPQS, SQSS…APQV, and PGGS…APRE. Residues 32–693 are Extracellular-facing; the sequence is VIHYEIPEER…REQKKNLTFY (662 aa). 6 N-linked (GlcNAc...) asparagine glycosylation sites follow: asparagine 245, asparagine 424, asparagine 478, asparagine 550, asparagine 615, and asparagine 689. A helical membrane pass occupies residues 694–714; the sequence is LLLSLILVSVGFVVTVFGVII. The Cytoplasmic portion of the chain corresponds to 715–934; the sequence is FKVYKWKQSR…KKKSGKKEKK (220 aa). Disordered regions lie at residues 804 to 843 and 904 to 934; these read ESAP…WPNN and ATLT…KEKK. A compositionally biased stretch (polar residues) spans 812–843; sequence APPNTDWRFSQAQRPGTSGSQNGDDTGTWPNN. The segment covering 924 to 934 has biased composition (basic residues); that stretch reads NKKKSGKKEKK.

Its subcellular location is the cell membrane. Functionally, potential calcium-dependent cell-adhesion protein. May be involved in the establishment and maintenance of specific neuronal connections in the brain. The chain is Protocadherin gamma-C3 (PCDHGC3) from Homo sapiens (Human).